The chain runs to 335 residues: Glycerol-3-phosphate dehydrogenase [NAD(P)+] (335 aa).

The NADPH site is built by Ser-10, Phe-11, Arg-31, and Lys-105. Sn-glycerol 3-phosphate-binding residues include Lys-105, Gly-136, and Ser-138. Ala-140 lines the NADPH pocket. The sn-glycerol 3-phosphate site is built by Lys-191, Asp-244, Ser-254, Arg-255, and Asn-256. Lys-191 acts as the Proton acceptor in catalysis. Arg-255 is a binding site for NADPH. NADPH-binding residues include Val-279 and Glu-281.

The protein belongs to the NAD-dependent glycerol-3-phosphate dehydrogenase family.

The protein resides in the cytoplasm. The enzyme catalyses sn-glycerol 3-phosphate + NAD(+) = dihydroxyacetone phosphate + NADH + H(+). It catalyses the reaction sn-glycerol 3-phosphate + NADP(+) = dihydroxyacetone phosphate + NADPH + H(+). The protein operates within membrane lipid metabolism; glycerophospholipid metabolism. Its function is as follows. Catalyzes the reduction of the glycolytic intermediate dihydroxyacetone phosphate (DHAP) to sn-glycerol 3-phosphate (G3P), the key precursor for phospholipid synthesis. In Leptospira borgpetersenii serovar Hardjo-bovis (strain L550), this protein is Glycerol-3-phosphate dehydrogenase [NAD(P)+].